The sequence spans 2628 residues: Hemagglutinin A (2628 aa).

An N-terminal signal peptide occupies residues 1 to 24; it reads MRKLNSLFSLAVLLSLLCWGQTAA. 5 peptidase C25-like regions span residues 25 to 539, 540 to 995, 996 to 1451, 1452 to 1907, and 2074 to 2628; these read AQGG…TPPP, GGTS…TPPP, and IDAD…LAVK. Disordered regions lie at residues 493–512, 520–546, 944–1002, 1400–1458, 1856–1881, 1890–1909, and 2336–2358; these read WDAPNGTPNPNPGTTTLSES, SWKTIDADGDGNNWTTTPPPGGTSFAG, KWDA…SFAG, KWDAPNGTPNPNPNPNPGTTTLSESF, KTIDADGDGNNWTTTPPPGG, and SSWKTIDADGDGNNWTTTPPPGG. Positions 496-508 are enriched in low complexity; the sequence is PNGTPNPNPGTTT.

This sequence belongs to the peptidase C25 family.

Functionally, agglutinates erythrocytes. The polypeptide is Hemagglutinin A (hagA) (Porphyromonas gingivalis (Bacteroides gingivalis)).